A 179-amino-acid chain; its full sequence is Large ribosomal subunit protein uL6 (179 aa).

A disordered region spans residues 151-179 (RKPEPYKGKGIKYDNEQIRRKAGKSGGKK). Basic and acidic residues predominate over residues 152–169 (KPEPYKGKGIKYDNEQIR). A compositionally biased stretch (basic residues) spans 170 to 179 (RKAGKSGGKK).

It belongs to the universal ribosomal protein uL6 family. Part of the 50S ribosomal subunit.

In terms of biological role, this protein binds to the 23S rRNA, and is important in its secondary structure. It is located near the subunit interface in the base of the L7/L12 stalk, and near the tRNA binding site of the peptidyltransferase center. This is Large ribosomal subunit protein uL6 from Nitratidesulfovibrio vulgaris (strain ATCC 29579 / DSM 644 / CCUG 34227 / NCIMB 8303 / VKM B-1760 / Hildenborough) (Desulfovibrio vulgaris).